Here is a 42-residue protein sequence, read N- to C-terminus: Alpha-lactalbumin I (42 aa).

In terms of domain architecture, C-type lysozyme spans 1 to 42 (IDYRKCQASQILKEHGMDKVIPLPELVCTMFHISGLSPQAEV).

Belongs to the glycosyl hydrolase 22 family. Lactose synthase (LS) is a heterodimer of a catalytic component, beta1,4-galactosyltransferase (beta4Gal-T1) and a regulatory component, alpha-lactalbumin (LA). In terms of tissue distribution, mammary gland specific. Secreted in milk.

Its subcellular location is the secreted. Functionally, regulatory subunit of lactose synthase, changes the substrate specificity of galactosyltransferase in the mammary gland making glucose a good acceptor substrate for this enzyme. This enables LS to synthesize lactose, the major carbohydrate component of milk. In other tissues, galactosyltransferase transfers galactose onto the N-acetylglucosamine of the oligosaccharide chains in glycoproteins. The polypeptide is Alpha-lactalbumin I (LALBA) (Macropus giganteus (Eastern gray kangaroo)).